A 212-amino-acid polypeptide reads, in one-letter code: Putative tyrosine-protein phosphatase OCA1 (212 aa).

The disordered stretch occupies residues M1–I27. Residues N12–P22 are compositionally biased toward basic and acidic residues. One can recognise a Tyrosine-protein phosphatase domain in the interval N40–P208. C146 (phosphocysteine intermediate) is an active-site residue.

The protein belongs to the protein-tyrosine phosphatase family.

The protein resides in the cytoplasm. The enzyme catalyses O-phospho-L-tyrosyl-[protein] + H2O = L-tyrosyl-[protein] + phosphate. Putative tyrosine-protein phosphatase required for protection against superoxide stress. The chain is Putative tyrosine-protein phosphatase OCA1 (OCA1) from Scheffersomyces stipitis (strain ATCC 58785 / CBS 6054 / NBRC 10063 / NRRL Y-11545) (Yeast).